Reading from the N-terminus, the 309-residue chain is MVLGRGSLCLRSLSVLGAACARRGLGQALLGLSLCHTDFRKNLTVQQDMMKIELLPALTDNYMYLIIDEDTQEAAVVDPVQPQKVIETVKKHRVKLTTVLTTHHHWDHAGGNEKLVKLEPGLKVYGGDDRIGALTHKVTHLSTLEVGSLSVKCLSTPCHTSGHICYFVSKPGSSEPSAVFTGDTLFVAGCGKFYEGTADEMYKALLEVLGRLPPDTKVICGHEYTVNNLKFARHVEPGNTAVQEKLAWAKEKNAIGEPTVPSTLAEEFTYNPFMRVKEKTVQQHAGETDPVTTMRAIRREKDQFKVPRD.

Residues 1 to 24 (MVLGRGSLCLRSLSVLGAACARRG) constitute a mitochondrion transit peptide. Lys90 is modified (N6-acetyllysine). Positions 103, 105, 107, and 108 each coordinate Zn(2+). The residue at position 117 (Lys117) is an N6-acetyllysine. His159 and Asp183 together coordinate Zn(2+). Substrate is bound by residues 192 to 194 (KFY) and 222 to 224 (HEY). Zn(2+) is bound at residue His222. Residue Lys230 is modified to N6-acetyllysine; alternate. Position 230 is an N6-succinyllysine; alternate (Lys230). Position 298–301 (298–301 (RREK)) interacts with substrate.

This sequence belongs to the metallo-beta-lactamase superfamily. Glyoxalase II family. In terms of assembly, monomer. It depends on Zn(2+) as a cofactor. In terms of tissue distribution, strongly expressed in testis, skeletal muscle and heart. Weakly expressed in placenta, pancreas, spleen and peripheral blood leukocytes.

Its subcellular location is the mitochondrion matrix. It is found in the cytoplasm. It catalyses the reaction an S-(2-hydroxyacyl)glutathione + H2O = a 2-hydroxy carboxylate + glutathione + H(+). It carries out the reaction (R)-S-lactoylglutathione + H2O = (R)-lactate + glutathione + H(+). Its pathway is secondary metabolite metabolism; methylglyoxal degradation; (R)-lactate from methylglyoxal: step 2/2. Functionally, thiolesterase that catalyzes the hydrolysis of S-D-lactoyl-glutathione to form glutathione and D-lactic acid. In Rattus norvegicus (Rat), this protein is Hydroxyacylglutathione hydrolase, mitochondrial (Hagh).